The following is an 817-amino-acid chain: Coiled-coil domain-containing protein 175 (817 aa).

Coiled-coil stretches lie at residues 130–166 (ILEI…ALGI) and 217–594 (LQDA…KQEE). The interval 761–817 (EEESPSSLSKEDLQKAGMKQKEEKTLRFSPSLHTRRDTLSRNCKMIKKRSRSPKNKP) is disordered. Over residues 769–786 (SKEDLQKAGMKQKEEKTL) the composition is skewed to basic and acidic residues. Residues 804–817 (KMIKKRSRSPKNKP) are compositionally biased toward basic residues.

The polypeptide is Coiled-coil domain-containing protein 175 (Ccdc175) (Rattus norvegicus (Rat)).